The chain runs to 542 residues: Anaerobic glycerol-3-phosphate dehydrogenase subunit A (542 aa).

10-38 (DVIIIGGGATGAGIARDCALRGLRVILVE) contacts FAD.

It belongs to the FAD-dependent glycerol-3-phosphate dehydrogenase family. As to quaternary structure, composed of a catalytic GlpA/B dimer and of membrane bound GlpC. The cofactor is FAD. It depends on FMN as a cofactor.

The protein resides in the cell inner membrane. The catalysed reaction is a quinone + sn-glycerol 3-phosphate = dihydroxyacetone phosphate + a quinol. It participates in polyol metabolism; glycerol degradation via glycerol kinase pathway; glycerone phosphate from sn-glycerol 3-phosphate (anaerobic route): step 1/1. Its function is as follows. Conversion of glycerol 3-phosphate to dihydroxyacetone. Uses fumarate or nitrate as electron acceptor. The chain is Anaerobic glycerol-3-phosphate dehydrogenase subunit A (glpA) from Escherichia coli O157:H7.